Reading from the N-terminus, the 343-residue chain is Tribbles homolog 2 (343 aa).

The disordered stretch occupies residues 25–50 (EELSSIRSAEPSQSFSPNLGSPSPPE). Residues 29-45 (SIRSAEPSQSFSPNLGS) are compositionally biased toward polar residues. One can recognise a Protein kinase domain in the interval 61–308 (IGKYLLLEPL…SQEILDHPWF (248 aa)).

It belongs to the protein kinase superfamily. CAMK Ser/Thr protein kinase family. Tribbles subfamily. As to expression, expressed in granulosa cells of the dominant follicles of the ovary and down-regulated in ovulatory follicles.

The protein localises to the cytoplasm. It localises to the cytoskeleton. In terms of biological role, interacts with MAPK kinases and regulates activation of MAP kinases. Does not display kinase activity. The sequence is that of Tribbles homolog 2 from Bos taurus (Bovine).